The following is a 407-amino-acid chain: 12S rRNA N(4)-cytidine methyltransferase METTL15 (407 aa).

Residues 44 to 63 are disordered; it reads EAQEETDQTGIQELHRSQDR. Residues 100–102, Asp119, Phe146, Asp169, and Gln176 contribute to the S-adenosyl-L-methionine site; that span reads GGH. Ser358 is subject to Phosphoserine. Residues 386–407 are disordered; that stretch reads EDEDVQDNPRGRSAKLRAAIKL. Over residues 397–407 the composition is skewed to basic residues; that stretch reads RSAKLRAAIKL.

Belongs to the methyltransferase superfamily. RsmH family.

It is found in the mitochondrion matrix. It catalyses the reaction cytidine(839) in 12S rRNA + S-adenosyl-L-methionine = N(4)-methylcytidine(839) in 12S rRNA + S-adenosyl-L-homocysteine + H(+). In terms of biological role, N4-methylcytidine (m4C) methyltransferase responsible for the methylation of position C839 in mitochondrial 12S rRNA. Involved in the stabilization of 12S rRNA folding, therefore facilitating the assembly of the mitochondrial small ribosomal subunits. This is 12S rRNA N(4)-cytidine methyltransferase METTL15 (METTL15) from Bos taurus (Bovine).